Here is a 153-residue protein sequence, read N- to C-terminus: Putative pre-16S rRNA nuclease (153 aa).

It belongs to the YqgF nuclease family.

The protein localises to the cytoplasm. Functionally, could be a nuclease involved in processing of the 5'-end of pre-16S rRNA. This chain is Putative pre-16S rRNA nuclease, found in Prochlorococcus marinus (strain AS9601).